Reading from the N-terminus, the 216-residue chain is Small ribosomal subunit protein uS3c (216 aa).

The KH type-2 domain occupies 43–118 (IKNYIQKNRR…RLKIAITRVE (76 aa)).

It belongs to the universal ribosomal protein uS3 family. Part of the 30S ribosomal subunit.

The protein resides in the plastid. Its subcellular location is the chloroplast. The chain is Small ribosomal subunit protein uS3c (rps3) from Dioscorea elephantipes (Elephant's foot yam).